The sequence spans 280 residues: Dehydrogenase/reductase SDR family member 2, mitochondrial (280 aa).

The transit peptide at 1–23 (MLSAVARGYQGWFHPCARLSVRM) directs the protein to the mitochondrion. NAD(+)-binding residues include serine 46 and isoleucine 48. The residue at position 96 (lysine 96) is an N6-acetyllysine; alternate. Lysine 96 bears the N6-succinyllysine; alternate mark. Serine 172 is a substrate binding site. NAD(+) is bound by residues tyrosine 185 and lysine 189. The active-site Proton acceptor is the tyrosine 185. Lysine 219 carries the post-translational modification N6-acetyllysine; alternate. Lysine 219 carries the N6-succinyllysine; alternate modification. Residue threonine 220 coordinates NAD(+). Serine 223 is subject to Phosphoserine. Position 237 is an N6-succinyllysine (lysine 237).

It belongs to the short-chain dehydrogenases/reductases (SDR) family. In terms of assembly, directly interacts with MDM2; this interaction occurs in the nucleus and does not target DHRS2 to degradation. Widely expressed, with highest levels in liver and kidney, followed by heart, spleen, skeletal muscle and placenta. In hemopoietic cells, expressed in dendritic cells, but not in monocytes, macrophages, granulocytes, nor in B and T lymphocytes.

It is found in the mitochondrion matrix. The protein resides in the nucleus. Functionally, NADPH-dependent oxidoreductase which catalyzes the reduction of dicarbonyl compounds. Displays reductase activity in vitro with 3,4-hexanedione, 2,3-heptanedione and 1-phenyl-1,2-propanedione as substrates. May function as a dicarbonyl reductase in the enzymatic inactivation of reactive carbonyls involved in covalent modification of cellular components. Also displays a minor hydroxysteroid dehydrogenase activity toward bile acids such as ursodeoxycholic acid (UDCA) and isoursodeoxycholic acid (isoUDCA), which makes it unlikely to control hormone levels. Doesn't show any activity in vitro with retinoids and sugars as substrates. Attenuates MDM2-mediated p53/TP53 degradation, leading to p53/TP53 stabilization and increased transcription activity, resulting in the accumulation of MDM2 and CDKN1A/p21. Reduces proliferation, migration and invasion of cancer cells and well as the production of ROS in cancer. This chain is Dehydrogenase/reductase SDR family member 2, mitochondrial, found in Homo sapiens (Human).